A 471-amino-acid chain; its full sequence is Major facilitator-type transporter psiT1 (471 aa).

The tract at residues 1–36 is disordered; sequence MNPTTATDAHERTSLLSGRPQSAANSTAPYERQVQP. Polar residues predominate over residues 14 to 36; sequence SLLSGRPQSAANSTAPYERQVQP. N25 carries N-linked (GlcNAc...) asparagine glycosylation. 8 helical membrane-spanning segments follow: residues 44 to 64, 108 to 128, 140 to 160, 168 to 188, 212 to 232, 237 to 257, 322 to 342, and 356 to 376; these read TPVT…TMVI, AIMV…GTGI, PVLM…LTVQ, LVTF…TTVF, GWLV…TTFL, AVYI…AFVL, LHSF…LIFF, and VMTT…PLFI. N384 carries N-linked (GlcNAc...) asparagine glycosylation. Residues 424-444 traverse the membrane as a helical segment; it reads VHITVISWTIESLAYIVLGTV.

Belongs to the major facilitator superfamily. TCR/Tet family.

It localises to the membrane. Its function is as follows. Major facilitator-type transporter; part of the gene cluster that mediates the biosynthesis of psilocybin, a psychotropic tryptamine-derived natural product. In Psilocybe cyanescens, this protein is Major facilitator-type transporter psiT1.